Reading from the N-terminus, the 245-residue chain is Phycocyanobilin:ferredoxin oxidoreductase (245 aa).

This sequence belongs to the HY2 family.

The enzyme catalyses (2R,3Z)-phycocyanobilin + 4 oxidized [2Fe-2S]-[ferredoxin] = biliverdin IXalpha + 4 reduced [2Fe-2S]-[ferredoxin] + 4 H(+). In terms of biological role, catalyzes the four-electron reduction of biliverdin IX-alpha (2-electron reduction at both the A and D rings); the reaction proceeds via an isolatable 2-electron intermediate, 181,182-dihydrobiliverdin. In Trichodesmium erythraeum (strain IMS101), this protein is Phycocyanobilin:ferredoxin oxidoreductase.